Reading from the N-terminus, the 100-residue chain is Mini zinc finger protein 2 (100 aa).

The disordered stretch occupies residues 1–26 (MRKRQVVLRRASPEEPSRSSSTASSL). The ZF-HD dimerization-type; degenerate zinc-finger motif lies at 33 to 83 (YGECQKNHAAAVGGYAVDGCREFMASRGEEGTVAALTCAACGCHRSFHRRE).

In terms of assembly, homo- and heterodimers. Interacts with ZHD1, ZHD3, ZHD5, ZHD8, ZHD10 and ZHD13. As to expression, mostly expressed in stems, flowers and siliques, and, to a lower extent, in inflorescence.

It is found in the cytoplasm. Its function is as follows. Inhibits zinc finger homeodomain (ZHD) transcription factors by interacting with them to prevent both their nuclear localization and their DNA-binding properties. Involved in integrating signals from multiple hormones by regulating the expression of specific genes. This Arabidopsis thaliana (Mouse-ear cress) protein is Mini zinc finger protein 2 (MIF2).